Here is an 881-residue protein sequence, read N- to C-terminus: Mechanosensitive ion channel protein 4 (881 aa).

The tract at residues 35 to 245 (FWHNDKSSKP…EEEDPFSEED (211 aa)) is disordered. A compositionally biased stretch (basic and acidic residues) spans 56-66 (FMRRSSEKSEE). Composition is skewed to polar residues over residues 73 to 82 (LINQFLNKQK), 100 to 118 (QKNTVPPLSSTAVSGSASP), and 206 to 230 (TPRSGNLNPGFSGRNTKPGTPNQGG). The segment covering 234–245 (LEEEEDPFSEED) has biased composition (acidic residues). The next 4 helical transmembrane spans lie at 255–275 (ICVWVIIEWIFLILIIASLIC), 297–317 (VMVLVLICGRLVSSWIVKLFV), 339–359 (KPVQNCLWLGLVLIAWHFLFD), and 377–397 (VLICLLVAVIIWLIKTLLVKV). Residues 457 to 501 (GPKAVSSPPQVTVGSGRLQKSPSRVGKSPVLSRSGSKKEGGEEGI) form a disordered region. The span at 463–478 (SPPQVTVGSGRLQKSP) shows a compositional bias: polar residues. Basic and acidic residues predominate over residues 492–501 (SKKEGGEEGI). 2 consecutive transmembrane segments (helical) span residues 643-663 (IVDVLVSIVILIIWLLILGIA) and 678-698 (VVFVFGNSCKTIFEAVIFVFV).

This sequence belongs to the MscS (TC 1.A.23) family.

It localises to the membrane. In terms of biological role, mechanosensitive channel that opens in response to stretch forces in the membrane lipid bilayer. This chain is Mechanosensitive ion channel protein 4 (MSL4), found in Arabidopsis thaliana (Mouse-ear cress).